The sequence spans 894 residues: B-cell lymphoma/leukemia 11B (894 aa).

A phosphoserine mark is found at S97 and S110. The residue at position 120 (T120) is a Phosphothreonine. Position 129 is a phosphoserine (S129). K137 participates in a covalent cross-link: Glycyl lysine isopeptide (Lys-Gly) (interchain with G-Cter in SUMO2). Residues 221–251 (YICTTCKQPFNSAWFLLQHAQNTHGFRIYLE) form a C2H2-type 1 zinc finger. S256 carries the phosphoserine modification. Residue T260 is modified to Phosphothreonine. Phosphoserine is present on S277. R293 bears the Omega-N-methylarginine mark. R322 carries the asymmetric dimethylarginine modification. S358 carries the post-translational modification Phosphoserine. Disordered stretches follow at residues 370 to 428 (LAGN…KSKS) and 471 to 583 (KRHM…GGGA). Position 376 is a phosphothreonine (T376). 3 positions are modified to phosphoserine: S381, S398, and S401. The span at 396–423 (QPSPKSPFLSTPPLPPMPPGGTPPPQPP) shows a compositional bias: pro residues. T406 and T417 each carry phosphothreonine. C2H2-type zinc fingers lie at residues 427 to 454 (KSCEFCGKTFKFQSNLIVHRRSHTGEKP) and 455 to 482 (YKCQLCDHACSQASKLKRHMKTHMHKAG). Over residues 471-480 (KRHMKTHMHK) the composition is skewed to basic residues. Phosphoserine occurs at positions 483, 488, 496, and 497. Positions 511-529 (KAADGDFRHHESDPSLGHE) are enriched in basic and acidic residues. A compositionally biased stretch (acidic residues) spans 530–546 (PEEEDEEEEEEEEELLL). Positions 568-583 (NGGGGVPGVPGAGGGA) are enriched in gly residues. Glycyl lysine isopeptide (Lys-Gly) (interchain with G-Cter in SUMO2) cross-links involve residues K591 and K617. The disordered stretch occupies residues 653 to 680 (GRGGGFAPGTEPFPGLFPRKPAPLPSPG). The residue at position 678 (S678) is a Phosphoserine. Glycyl lysine isopeptide (Lys-Gly) (interchain with G-Cter in SUMO2) cross-links involve residues K686 and K723. A compositionally biased stretch (polar residues) spans 737–752 (FATSSEHSSENGSLRF). A disordered region spans residues 737-794 (FATSSEHSSENGSLRFSTPPGDLLDGGLSGRSGTASGGSTPHLGGPGPGRPSSKEGRR). Residues 753–775 (STPPGDLLDGGLSGRSGTASGGS) show a composition bias toward low complexity. T754 carries the phosphothreonine modification. S765 and S772 each carry phosphoserine. 3 consecutive C2H2-type zinc fingers follow at residues 796–823 (DTCEYCGKVFKNCSNLTVHRRSHTGERP), 824–853 (YKCELCNYACAQSSKLTRHMKTHGQIGKEV), and 854–884 (YRCDICQMPFSVYSTLEKHMKKWHGEHLLTN). An N6-acetyllysine modification is found at K851. Residue K887 forms a Glycyl lysine isopeptide (Lys-Gly) (interchain with G-Cter in SUMO2) linkage.

As to quaternary structure, interacts with TFCOUP1, SIRT1, ARP1 and EAR2. Interacts with EP300; the interaction is detected in activated T-lymphocytes, but not under resting conditions. Sumoylated with SUMO1. As to expression, highly expressed in brain and in malignant T-cell lines derived from patients with adult T-cell leukemia/lymphoma.

Its subcellular location is the nucleus. In terms of biological role, key regulator of both differentiation and survival of T-lymphocytes during thymocyte development in mammals. Essential in controlling the responsiveness of hematopoietic stem cells to chemotactic signals by modulating the expression of the receptors CCR7 and CCR9, which direct the movement of progenitor cells from the bone marrow to the thymus. Is a regulator of IL2 promoter and enhances IL2 expression in activated CD4(+) T-lymphocytes. Tumor-suppressor that represses transcription through direct, TFCOUP2-independent binding to a GC-rich response element. May also function in the P53-signaling pathway. This is B-cell lymphoma/leukemia 11B (BCL11B) from Homo sapiens (Human).